An 881-amino-acid polypeptide reads, in one-letter code: Alanine--tRNA ligase (881 aa).

4 residues coordinate Zn(2+): histidine 568, histidine 572, cysteine 670, and histidine 674.

The protein belongs to the class-II aminoacyl-tRNA synthetase family. Requires Zn(2+) as cofactor.

The protein resides in the cytoplasm. It carries out the reaction tRNA(Ala) + L-alanine + ATP = L-alanyl-tRNA(Ala) + AMP + diphosphate. Its function is as follows. Catalyzes the attachment of alanine to tRNA(Ala) in a two-step reaction: alanine is first activated by ATP to form Ala-AMP and then transferred to the acceptor end of tRNA(Ala). Also edits incorrectly charged Ser-tRNA(Ala) and Gly-tRNA(Ala) via its editing domain. This Clostridium acetobutylicum (strain ATCC 824 / DSM 792 / JCM 1419 / IAM 19013 / LMG 5710 / NBRC 13948 / NRRL B-527 / VKM B-1787 / 2291 / W) protein is Alanine--tRNA ligase.